A 384-amino-acid chain; its full sequence is 8-amino-7-oxononanoate synthase (384 aa).

R21 is a substrate binding site. A pyridoxal 5'-phosphate-binding site is contributed by 108 to 109; sequence GF. H133 is a substrate binding site. S179, H207, and T233 together coordinate pyridoxal 5'-phosphate. Residue K236 is modified to N6-(pyridoxal phosphate)lysine. T352 serves as a coordination point for substrate.

Belongs to the class-II pyridoxal-phosphate-dependent aminotransferase family. BioF subfamily. Homodimer. The cofactor is pyridoxal 5'-phosphate.

It catalyses the reaction 6-carboxyhexanoyl-[ACP] + L-alanine + H(+) = (8S)-8-amino-7-oxononanoate + holo-[ACP] + CO2. Its pathway is cofactor biosynthesis; biotin biosynthesis. In terms of biological role, catalyzes the decarboxylative condensation of pimeloyl-[acyl-carrier protein] and L-alanine to produce 8-amino-7-oxononanoate (AON), [acyl-carrier protein], and carbon dioxide. The polypeptide is 8-amino-7-oxononanoate synthase (Escherichia coli O17:K52:H18 (strain UMN026 / ExPEC)).